Consider the following 141-residue polypeptide: Hemoglobin subunit alpha-D (141 aa).

Positions 1–141 (VLTAEDRRLL…VADVLSEKYR (141 aa)) constitute a Globin domain. His57 and His87 together coordinate heme b.

The protein belongs to the globin family. As to quaternary structure, the deoxy-Hb is a heterotetramer of two alpha and two beta chains, but oxygenation results in dissociation to dimers. In terms of tissue distribution, red blood cells.

Its function is as follows. Involved in oxygen transport from the lung to the various peripheral tissues. In Erythrolamprus miliaris (South American water snake), this protein is Hemoglobin subunit alpha-D (HBAD).